Here is a 223-residue protein sequence, read N- to C-terminus: Phosphoribosylformylglycinamidine synthase subunit PurQ (223 aa).

The Glutamine amidotransferase type-1 domain occupies 4–223 (KIGVITFPGT…FLSAIGTIAA (220 aa)). The active-site Nucleophile is Cys87. Catalysis depends on residues His195 and Glu197.

Part of the FGAM synthase complex composed of 1 PurL, 1 PurQ and 2 PurS subunits.

The protein localises to the cytoplasm. It carries out the reaction N(2)-formyl-N(1)-(5-phospho-beta-D-ribosyl)glycinamide + L-glutamine + ATP + H2O = 2-formamido-N(1)-(5-O-phospho-beta-D-ribosyl)acetamidine + L-glutamate + ADP + phosphate + H(+). The enzyme catalyses L-glutamine + H2O = L-glutamate + NH4(+). It participates in purine metabolism; IMP biosynthesis via de novo pathway; 5-amino-1-(5-phospho-D-ribosyl)imidazole from N(2)-formyl-N(1)-(5-phospho-D-ribosyl)glycinamide: step 1/2. Its function is as follows. Part of the phosphoribosylformylglycinamidine synthase complex involved in the purines biosynthetic pathway. Catalyzes the ATP-dependent conversion of formylglycinamide ribonucleotide (FGAR) and glutamine to yield formylglycinamidine ribonucleotide (FGAM) and glutamate. The FGAM synthase complex is composed of three subunits. PurQ produces an ammonia molecule by converting glutamine to glutamate. PurL transfers the ammonia molecule to FGAR to form FGAM in an ATP-dependent manner. PurS interacts with PurQ and PurL and is thought to assist in the transfer of the ammonia molecule from PurQ to PurL. This Corynebacterium efficiens (strain DSM 44549 / YS-314 / AJ 12310 / JCM 11189 / NBRC 100395) protein is Phosphoribosylformylglycinamidine synthase subunit PurQ.